The chain runs to 235 residues: LexA repressor (235 aa).

A DNA-binding region (H-T-H motif) is located at residues 47–67 (IREIADAVGLTSTSSVAHQLR). Active-site for autocatalytic cleavage activity residues include Ser-159 and Lys-196.

The protein belongs to the peptidase S24 family. Homodimer.

It carries out the reaction Hydrolysis of Ala-|-Gly bond in repressor LexA.. Functionally, represses a number of genes involved in the response to DNA damage (SOS response), including recA and lexA. In the presence of single-stranded DNA, RecA interacts with LexA causing an autocatalytic cleavage which disrupts the DNA-binding part of LexA, leading to derepression of the SOS regulon and eventually DNA repair. This chain is LexA repressor, found in Mycobacterium leprae (strain Br4923).